Here is a 555-residue protein sequence, read N- to C-terminus: Membrane protein insertase YidC (555 aa).

A helical membrane pass occupies residues 7–24; that stretch reads ILWVIFSMSLVLLYDNWQ. Residues 61–81 form a disordered region; the sequence is TAGAAAPAAPGGAPQAAAQPT. 5 helical membrane-spanning segments follow: residues 341 to 361, 364 to 384, 430 to 450, 468 to 488, and 503 to 523; these read GWLT…HGFL, WGWS…PLSA, LGGC…YWVL, LSVP…MFVQ, and VMMI…AGLV.

This sequence belongs to the OXA1/ALB3/YidC family. Type 1 subfamily. In terms of assembly, interacts with the Sec translocase complex via SecD. Specifically interacts with transmembrane segments of nascent integral membrane proteins during membrane integration.

The protein localises to the cell inner membrane. Its function is as follows. Required for the insertion and/or proper folding and/or complex formation of integral membrane proteins into the membrane. Involved in integration of membrane proteins that insert both dependently and independently of the Sec translocase complex, as well as at least some lipoproteins. Aids folding of multispanning membrane proteins. This chain is Membrane protein insertase YidC, found in Cupriavidus pinatubonensis (strain JMP 134 / LMG 1197) (Cupriavidus necator (strain JMP 134)).